A 386-amino-acid chain; its full sequence is Methionine aminopeptidase 1 (386 aa).

An N-acetylalanine modification is found at Ala-2. The segment at 6–59 (TRVCETDGCSSEAKLQCPTCIKLGIQGSYFCSQECFKGSWATHKLLHKKAKDEK) adopts a C6H2-type zinc-finger fold. Zn(2+) contacts are provided by Cys-9, Cys-14, Cys-22, Cys-25, Cys-36, Cys-40, His-48, His-52, and Lys-53. Residue His-203 coordinates a protein. Zn(2+) is bound by residues Asp-220, Asp-231, and His-294. His-301 is an a protein binding site. 2 residues coordinate Zn(2+): Glu-327 and Glu-358.

This sequence belongs to the peptidase M24A family. Methionine aminopeptidase type 1 subfamily. Associates with the 60S ribosomal subunit of the 80S translational complex. The cofactor is Zn(2+). Co(2+) is required as a cofactor. Mn(2+) serves as cofactor. It depends on Fe(2+) as a cofactor.

It localises to the cytoplasm. It catalyses the reaction Release of N-terminal amino acids, preferentially methionine, from peptides and arylamides.. Its function is as follows. Cotranslationally removes the N-terminal methionine from nascent proteins. The N-terminal methionine is often cleaved when the second residue in the primary sequence is small and uncharged (Met-Ala-, Cys, Gly, Pro, Ser, Thr, or Val). This is Methionine aminopeptidase 1 (Metap1) from Mus musculus (Mouse).